A 479-amino-acid polypeptide reads, in one-letter code: Glutamyl-tRNA reductase (479 aa).

Substrate-binding positions include 49–52 (TCNR), Ser-109, 114–116 (EQQ), and Gln-120. The active-site Nucleophile is Cys-50. 191 to 196 (GAGSMG) contacts NADP(+).

This sequence belongs to the glutamyl-tRNA reductase family. Homodimer.

It catalyses the reaction (S)-4-amino-5-oxopentanoate + tRNA(Glu) + NADP(+) = L-glutamyl-tRNA(Glu) + NADPH + H(+). It participates in porphyrin-containing compound metabolism; protoporphyrin-IX biosynthesis; 5-aminolevulinate from L-glutamyl-tRNA(Glu): step 1/2. Its function is as follows. Catalyzes the NADPH-dependent reduction of glutamyl-tRNA(Glu) to glutamate 1-semialdehyde (GSA). This is Glutamyl-tRNA reductase from Rhodococcus jostii (strain RHA1).